The sequence spans 182 residues: Plasmolipin (182 aa).

The interval 1-20 (MAEFPSKVNTRTSSPAQGGG) is disordered. The Cytoplasmic portion of the chain corresponds to 1 to 35 (MAEFPSKVNTRTSSPAQGGGAVVSTLSPDLGFVRS). Residues 7 to 16 (KVNTRTSSPA) are compositionally biased toward polar residues. Positions 32 to 166 (FVRSSLGALM…SAFLSFQAWR (135 aa)) constitute an MARVEL domain. The helical transmembrane segment at 36 to 56 (SLGALMLLQLVLGLLVWALIA) threads the bilayer. Topologically, residues 57–68 (DTPYHLYPSYGW) are extracellular. Residues 69–89 (VMFVAVFLWLVTIIFFVLYLF) traverse the membrane as a helical segment. Residues 90–99 (QLHMKLYMVP) lie on the Cytoplasmic side of the membrane. The helical transmembrane segment at 100–120 (WPLVLMVFNVGATVLYITAFI) threads the bilayer. The Extracellular segment spans residues 121–141 (TCSASVELTSLKGSQPYNQRA). A helical transmembrane segment spans residues 142 to 162 (AASFFSCLVMIAYGVSAFLSF). Residues 163–182 (QAWRGVGSNAATSQMAGGYA) are Cytoplasmic-facing.

It belongs to the MAL family. In terms of assembly, forms oligomers. Phosphorylated.

The protein localises to the cell membrane. It localises to the myelin membrane. Its subcellular location is the apical cell membrane. Main component of the myelin sheath that plays an important role in myelin membrane biogenesis and myelination. Plays an essential function in apical endocytosis. Regulates epithelial development through the regulation of apical endocytosis. Part of the intracellular machinery that mediates basolateral-to-apical transport of ICAM-1, an essential adhesion receptor in epithelial cells, from the subapical compartment in hepatic epithelial cells. The protein is Plasmolipin (PLLP) of Bos taurus (Bovine).